A 476-amino-acid chain; its full sequence is 3-isopropylmalate dehydratase large subunit (476 aa).

The [4Fe-4S] cluster site is built by Cys353, Cys413, and Cys416.

The protein belongs to the aconitase/IPM isomerase family. LeuC type 1 subfamily. As to quaternary structure, heterodimer of LeuC and LeuD. The cofactor is [4Fe-4S] cluster.

The enzyme catalyses (2R,3S)-3-isopropylmalate = (2S)-2-isopropylmalate. Its pathway is amino-acid biosynthesis; L-leucine biosynthesis; L-leucine from 3-methyl-2-oxobutanoate: step 2/4. Catalyzes the isomerization between 2-isopropylmalate and 3-isopropylmalate, via the formation of 2-isopropylmaleate. The protein is 3-isopropylmalate dehydratase large subunit of Yersinia enterocolitica serotype O:8 / biotype 1B (strain NCTC 13174 / 8081).